Here is a 527-residue protein sequence, read N- to C-terminus: Peptide chain release factor 3 (527 aa).

One can recognise a tr-type G domain in the interval alanine 9 to leucine 277. GTP contacts are provided by residues serine 18–threonine 25, aspartate 86–histidine 90, and asparagine 140–aspartate 143.

It belongs to the TRAFAC class translation factor GTPase superfamily. Classic translation factor GTPase family. PrfC subfamily.

It localises to the cytoplasm. Increases the formation of ribosomal termination complexes and stimulates activities of RF-1 and RF-2. It binds guanine nucleotides and has strong preference for UGA stop codons. It may interact directly with the ribosome. The stimulation of RF-1 and RF-2 is significantly reduced by GTP and GDP, but not by GMP. This Pseudomonas fluorescens (strain ATCC BAA-477 / NRRL B-23932 / Pf-5) protein is Peptide chain release factor 3.